Consider the following 1261-residue polypeptide: Structural maintenance of chromosomes protein 3 (1261 aa).

2 coiled-coil regions span residues 188-332 (EKIQ…HSLQ) and 406-450 (LIAD…YEMD). Residues 534–645 (NGYYGTVIEL…IIVRTLDQAA (112 aa)) form the SMC hinge domain. 3 coiled-coil regions span residues 677-826 (KRSK…MDLM), 857-930 (NERR…DKIT), and 1023-1085 (RELE…ENRK). A DA-box motif is present at residues 1159 to 1193 (LSGGQKSLVALAIIFSIQKCDPAPFYLFDEIDAAL).

The protein belongs to the SMC family. SMC3 subfamily. As to quaternary structure, component of the cohesin complex, composed of the smc-1 and smc-3 heterodimer attached via their SMC hinge domain, scc-1 which links them, and scc-3. Interacts with scc-1, smc-1 and tim-1.

The protein localises to the nucleus. It is found in the chromosome. Its function is as follows. Involved in chromosome cohesion during cell cycle and in DNA repair. Involved in the repair of double strand breaks during mitosis and meiosis. Required for chromosome segregation during mitosis. Central component of cohesin complex. The cohesin complex is required for the cohesion of sister chromatids after DNA replication. The cohesin complex apparently forms a large proteinaceous ring within which sister chromatids can be trapped. At anaphase, the complex is cleaved and dissociates from chromatin, allowing sister chromatids to segregate. Required for the localization of lab-1 to meiotic and mitotic chromosomes. This chain is Structural maintenance of chromosomes protein 3, found in Caenorhabditis elegans.